We begin with the raw amino-acid sequence, 274 residues long: Penicillin-insensitive murein endopeptidase (274 aa).

Positions Met1–Ala19 are cleaved as a signal peptide. Disulfide bonds link Cys44–Cys265, Cys187–Cys235, and Cys216–Cys223. The Zn(2+) site is built by His110, His113, Asp120, Asp147, His150, and His211. The disordered stretch occupies residues Pro227–Ile274.

The protein belongs to the peptidase M74 family. Dimer. The cofactor is Zn(2+).

The protein resides in the periplasm. Functionally, murein endopeptidase that cleaves the D-alanyl-meso-2,6-diamino-pimelyl amide bond that connects peptidoglycan strands. Likely plays a role in the removal of murein from the sacculus. The polypeptide is Penicillin-insensitive murein endopeptidase (Escherichia coli O9:H4 (strain HS)).